A 285-amino-acid polypeptide reads, in one-letter code: Nucleotide-binding protein Pfl01_0854 (285 aa).

ATP is bound at residue 8–15; the sequence is GRSGSGKS. 60–63 is a binding site for GTP; sequence DARN.

The protein belongs to the RapZ-like family.

In terms of biological role, displays ATPase and GTPase activities. In Pseudomonas fluorescens (strain Pf0-1), this protein is Nucleotide-binding protein Pfl01_0854.